A 761-amino-acid polypeptide reads, in one-letter code: RNA-binding protein mde7 (761 aa).

Polar residues-rich tracts occupy residues 31-46 (PNHS…NSLL), 58-83 (SRNS…TTPF), and 99-110 (SRNNSYLQGTAE). 2 disordered regions span residues 31–110 (PNHS…GTAE) and 188–213 (HYFD…EASN). A compositionally biased stretch (basic and acidic residues) spans 188 to 197 (HYFDDTDKSV). The segment covering 199-211 (SKSSSGSNSLSEA) has biased composition (low complexity). Residues 223-289 (IVGGLPDDFD…SSTNNFTIIQ (67 aa)) form the RRM 1 domain. Residues 442-466 (ESNSLSNQPNNFAQTSFDYQPNHPN) are compositionally biased toward polar residues. The segment at 442-468 (ESNSLSNQPNNFAQTSFDYQPNHPNAI) is disordered. The RRM 2 domain maps to 602-679 (NTIYVGNLSN…GGIRLSYSKN (78 aa)).

The polypeptide is RNA-binding protein mde7 (mde7) (Schizosaccharomyces pombe (strain 972 / ATCC 24843) (Fission yeast)).